The following is a 322-amino-acid chain: Deoxycytidylate deaminase (322 aa).

The 139-residue stretch at 173 to 311 (SWDSYFMEMA…SLLQAAGVQL (139 aa)) folds into the CMP/dCMP-type deaminase domain. Histidine 246 is a binding site for Zn(2+). Catalysis depends on glutamate 248, which acts as the Proton donor. The Zn(2+) site is built by cysteine 273 and cysteine 276.

It belongs to the cytidine and deoxycytidylate deaminase family. It depends on Zn(2+) as a cofactor.

It localises to the cytoplasm. The protein resides in the nucleus. The enzyme catalyses dCMP + H2O + H(+) = dUMP + NH4(+). Its function is as follows. Supplies the nucleotide substrate for thymidylate synthetase. The protein is Deoxycytidylate deaminase of Schizosaccharomyces pombe (strain 972 / ATCC 24843) (Fission yeast).